Consider the following 480-residue polypeptide: Aspartyl/glutamyl-tRNA(Asn/Gln) amidotransferase subunit B (480 aa).

This sequence belongs to the GatB/GatE family. GatB subfamily. Heterotrimer of A, B and C subunits.

The enzyme catalyses L-glutamyl-tRNA(Gln) + L-glutamine + ATP + H2O = L-glutaminyl-tRNA(Gln) + L-glutamate + ADP + phosphate + H(+). It carries out the reaction L-aspartyl-tRNA(Asn) + L-glutamine + ATP + H2O = L-asparaginyl-tRNA(Asn) + L-glutamate + ADP + phosphate + 2 H(+). Functionally, allows the formation of correctly charged Asn-tRNA(Asn) or Gln-tRNA(Gln) through the transamidation of misacylated Asp-tRNA(Asn) or Glu-tRNA(Gln) in organisms which lack either or both of asparaginyl-tRNA or glutaminyl-tRNA synthetases. The reaction takes place in the presence of glutamine and ATP through an activated phospho-Asp-tRNA(Asn) or phospho-Glu-tRNA(Gln). The chain is Aspartyl/glutamyl-tRNA(Asn/Gln) amidotransferase subunit B from Streptococcus pneumoniae serotype 2 (strain D39 / NCTC 7466).